The primary structure comprises 332 residues: Protein FAM131B (332 aa).

A disordered region spans residues 1 to 22 (MDSTSSLHGSSLHRPSTEQTRT). Serine 47 bears the Phosphoserine mark. Residues 95–114 (PTIQPQHSHEAVRRDTDAYS) form a disordered region. The segment covering 101–111 (HSHEAVRRDTD) has biased composition (basic and acidic residues). Phosphoserine occurs at positions 114 and 117. Positions 221–332 (LGPAFDDSQP…FDEEEGDANN (112 aa)) are disordered. Composition is skewed to basic and acidic residues over residues 272–281 (PVEEEKRPLA) and 288–302 (AGCRDLESLSPREDP). Phosphoserine is present on residues serine 295, serine 297, and serine 313. Threonine 316 carries the post-translational modification Phosphothreonine. Serine 317, serine 318, and serine 322 each carry phosphoserine. The span at 323 to 332 (FDEEEGDANN) shows a compositional bias: acidic residues.

It belongs to the FAM131 family.

The chain is Protein FAM131B (Fam131b) from Mus musculus (Mouse).